We begin with the raw amino-acid sequence, 175 residues long: Gamma-crystallin B (175 aa).

2 consecutive Beta/gamma crystallin 'Greek key' domains span residues 2–40 (GKIT…RVDS) and 41–83 (GCWM…RLIP). Lysine 3 carries N-linked (Glc) (glycation) lysine; in vitro glycosylation. Residues cysteine 19 and cysteine 23 are joined by a disulfide bond. The segment at 84 to 88 (QHTGT) is connecting peptide. Beta/gamma crystallin 'Greek key' domains lie at 89 to 129 (FRMR…NVLE) and 130 to 172 (GSWV…RRVM).

Belongs to the beta/gamma-crystallin family.

Functionally, crystallins are the dominant structural components of the vertebrate eye lens. In Bos taurus (Bovine), this protein is Gamma-crystallin B (CRYGB).